Reading from the N-terminus, the 1182-residue chain is Tyrosine-protein kinase ABL2 (1182 aa).

Residues 1-42 (MGQQVGRVGEAPGLQQPQPRGIRGSSAARPSGRRRDPAGRTA) form a disordered region. Glycine 2 carries N-myristoyl glycine lipidation. Residues 2 to 106 (GQQVGRVGEA…SKENLLGATE (105 aa)) are CAP. A compositionally biased stretch (low complexity) spans 20–30 (RGIRGSSAARP). Serine 97 carries the post-translational modification Phosphoserine. Positions 107 to 167 (SDPNLFVALY…PSNYITPVNS (61 aa)) constitute an SH3 domain. Phosphotyrosine occurs at positions 116, 161, 174, 185, 218, and 231. Residues 173–263 (WYHGPVSRSA…GLVTTLHYPA (91 aa)) form the SH2 domain. Tyrosine 261 is modified (phosphotyrosine; by ABL1 and autocatalysis). Tyrosine 272 carries the post-translational modification Phosphotyrosine; by autocatalysis. Serine 275 carries the phosphoserine modification. Residues 288 to 539 (ITMKHKLGGG…PSFAETHQAF (252 aa)) form the Protein kinase domain. 294-302 (LGGGQYGEV) is a binding site for ATP. Residues tyrosine 299 and tyrosine 303 each carry the phosphotyrosine modification. ATP contacts are provided by residues lysine 317 and 362-368 (EYMPYGN). Catalysis depends on aspartate 409, which acts as the Proton acceptor. The short motif at 427–451 (DFGLSRLMTGDTYTAHAGAKFPIKW) is the Kinase activation loop element. Tyrosine 439 bears the Phosphotyrosine; by autocatalysis and SRC-type Tyr-kinases mark. At tyrosine 459 the chain carries Phosphotyrosine. Tyrosine 568 carries the phosphotyrosine; by autocatalysis modification. Phosphoserine occurs at positions 606, 621, 632, 634, and 656. Disordered stretches follow at residues 612–642 (IRSTQASSGSPALPRKQRDKSPSSLLEDAKE) and 655–674 (SSFMKKRNAPTPPKRSSSFR). Residues 659–661 (KKR) carry the Nuclear localization signal motif. Phosphoserine is present on residues serine 670, serine 671, and serine 672. Tyrosine 684 bears the Phosphotyrosine; by autocatalysis mark. Positions 695-930 (SLQNADGFSV…AVLPTTHNHK (236 aa)) are F-actin-binding. Position 719 is a phosphotyrosine (tyrosine 719). The segment at 765–796 (LRAGKPTASDDTSKPFPRSNSTSSMSSGLPEQ) is disordered. Lysine 778 bears the N6-acetyllysine mark. Over residues 782 to 793 (RSNSTSSMSSGL) the composition is skewed to polar residues. At serine 785 the chain carries Phosphoserine. Threonine 802 is subject to Phosphothreonine. The span at 809 to 825 (RSKLQLERTVSTSSQPE) shows a compositional bias: polar residues. A disordered region spans residues 809–858 (RSKLQLERTVSTSSQPEENVDRANDMLPKKSEEGAAPARERPKAKLLPRG). Residues serine 819 and serine 822 each carry the phosphoserine modification. Basic and acidic residues predominate over residues 827 to 851 (NVDRANDMLPKKSEEGAAPARERPK). Serine 915 and serine 936 each carry phosphoserine. The tract at residues 964–1059 (HQVTSSGDKD…TSSISPAKMA (96 aa)) is disordered. The F-actin-binding stretch occupies residues 1020–1182 (EGGKKAAPGP…VQEISDVVQR (163 aa)).

Belongs to the protein kinase superfamily. Tyr protein kinase family. ABL subfamily. Interacts with PSMA7. Interacts with CTTN. Found in a complex with ABL1, ABL2, CRK and UNC119; leading to the inhibition of CRK phosphorylation by ABL kinases. Requires Mg(2+) as cofactor. It depends on Mn(2+) as a cofactor. In terms of processing, phosphorylated at Tyr-261 by ABL1 in response to oxidative stress. Phosphorylated by PDGFRB. Post-translationally, polyubiquitinated. Polyubiquitination of ABL2 leads to degradation. Most abundant in adult mouse brain, especially in synapse-rich regions.

Its subcellular location is the cytoplasm. The protein resides in the cytoskeleton. The catalysed reaction is L-tyrosyl-[protein] + ATP = O-phospho-L-tyrosyl-[protein] + ADP + H(+). Stabilized in the inactive form by an association between the SH3 domain and the SH2-TK linker region, interactions of the N-terminal cap, and contributions from an N-terminal myristoyl group and phospholipids. Activated by autophosphorylation as well as by SRC-family kinase-mediated phosphorylation. Activated by RIN1 binding to the SH2 and SH3 domains. Inhibited by imatinib mesylate (Gleevec). Phosphatidylinositol 4,5-bisphosphate (PIP2), a highly abundant phosphoinositide known to regulate cytoskeletal and membrane proteins, inhibits the tyrosine kinase activity. Functionally, non-receptor tyrosine-protein kinase that plays an ABL1-overlapping role in key processes linked to cell growth and survival such as cytoskeleton remodeling in response to extracellular stimuli, cell motility and adhesion, receptor endocytosis, autophagy, DNA damage response and apoptosis. Coordinates actin remodeling through tyrosine phosphorylation of proteins controlling cytoskeleton dynamics like MYH10 (involved in movement); CTTN (involved in signaling); or TUBA1 and TUBB (microtubule subunits). Binds directly F-actin and regulates actin cytoskeletal structure through its F-actin-bundling activity. Involved in the regulation of cell adhesion and motility through phosphorylation of key regulators of these processes such as CRK, CRKL or DOK1. Required for adhesion-dependent phosphorylation of ARHGAP35 which promotes its association with RASA1, resulting in recruitment of ARHGAP35 to the cell periphery where it inhibits RHO. Phosphorylates multiple receptor tyrosine kinases like PDGFRB and other substrates which are involved in endocytosis regulation such as RIN1. In brain, may regulate neurotransmission by phosphorylating proteins at the synapse. Finally, functions as its own regulator through autocatalytic activity as well as through phosphorylation of its inhibitor, ABI1. Positively regulates chemokine-mediated T-cell migration, polarization, and homing to lymph nodes and immune-challenged tissues, potentially via activation of NEDD9/HEF1 and RAP1. In Mus musculus (Mouse), this protein is Tyrosine-protein kinase ABL2.